Consider the following 438-residue polypeptide: Terminase, large subunit (438 aa).

The Walker A motif signature appears at 62–68 (SRRVGKS). Positions 150 to 155 (FIIFDE) match the Walker B motif motif. The active-site For ATPase activity is the E155. Residues D286, D342, and D418 each contribute to the Mg(2+) site.

It belongs to the Tequatrovirus large terminase family. As to quaternary structure, interacts with the terminase small subunit; the active complex is probably heterooligomeric. Interacts with the portal protein. Mg(2+) is required as a cofactor.

The terminase large subunit acts as an ATP driven molecular motor necessary for viral DNA translocation into empty capsids and as an endonuclease that cuts the viral genome to initiate and to end a packaging reaction The terminase lies at a unique vertex of the procapsid and is composed of two subunits, a small terminase subunit involved in viral DNA recognition (packaging sequence), and a large terminase subunit possessing endonucleolytic and ATPase activities. Both terminase subunits heterooligomerize and are docked on the portal protein to form the packaging machine. The terminase large subunit exhibits endonuclease activity and cleaves the viral genome concatemer. Direct long terminal repeats at each end of the genome are duplicated in concert with packaging. Once the capsid is packaged with the DNA, the terminase complex is substituted by the tail. This Escherichia phage T5 (Enterobacteria phage T5) protein is Terminase, large subunit.